A 143-amino-acid chain; its full sequence is Hemoglobin cathodic subunit alpha (143 aa).

The residue at position 2 (Ser2) is an N-acetylserine. One can recognise a Globin domain in the interval 2 to 143 (SLTAKDKSLI…LGAALSDKYR (142 aa)). His60 contacts O2. His89 serves as a coordination point for heme b.

This sequence belongs to the globin family. As to quaternary structure, heterotetramer of two alpha chains and two beta chains. As to expression, red blood cells.

Involved in oxygen transport from gills to the various peripheral tissues. This is Hemoglobin cathodic subunit alpha from Anguilla anguilla (European freshwater eel).